The chain runs to 501 residues: Xylulose kinase (501 aa).

Substrate is bound at residue 81–82 (MH). The active-site Proton acceptor is aspartate 239.

The protein belongs to the FGGY kinase family.

The enzyme catalyses D-xylulose + ATP = D-xylulose 5-phosphate + ADP + H(+). Catalyzes the phosphorylation of D-xylulose to D-xylulose 5-phosphate. The polypeptide is Xylulose kinase (Lactococcus lactis subsp. lactis (strain IL1403) (Streptococcus lactis)).